Here is a 292-residue protein sequence, read N- to C-terminus: 4-hydroxy-tetrahydrodipicolinate synthase (292 aa).

Thr45 is a binding site for pyruvate. Tyr133 functions as the Proton donor/acceptor in the catalytic mechanism. Lys161 acts as the Schiff-base intermediate with substrate in catalysis. Ile203 is a pyruvate binding site.

The protein belongs to the DapA family. In terms of assembly, homodimer.

The protein resides in the cytoplasm. It catalyses the reaction L-aspartate 4-semialdehyde + pyruvate = (2S,4S)-4-hydroxy-2,3,4,5-tetrahydrodipicolinate + H2O + H(+). The protein operates within amino-acid biosynthesis; L-lysine biosynthesis via DAP pathway; (S)-tetrahydrodipicolinate from L-aspartate: step 3/4. Functionally, catalyzes the condensation of (S)-aspartate-beta-semialdehyde [(S)-ASA] and pyruvate to 4-hydroxy-tetrahydrodipicolinate (HTPA). This is 4-hydroxy-tetrahydrodipicolinate synthase from Pseudomonas syringae pv. syringae (strain B728a).